A 31-amino-acid chain; its full sequence is Large ribosomal subunit protein bL21 (31 aa).

The protein belongs to the bacterial ribosomal protein bL21 family. As to quaternary structure, part of the 50S ribosomal subunit. Contacts protein L20.

In terms of biological role, this protein binds to 23S rRNA in the presence of protein L20. The sequence is that of Large ribosomal subunit protein bL21 (rplU) from Streptococcus thermophilus.